A 790-amino-acid chain; its full sequence is E3 ubiquitin-protein ligase Jade-2 (790 aa).

Disordered regions lie at residues 1–52 (MEEK…PSEV) and 111–130 (GPPA…SQPD). A phosphoserine mark is found at serine 9 and serine 15. Over residues 9 to 28 (SISSDNSDTTDSHATSTSAS) the composition is skewed to low complexity. An N6-acetyllysine mark is found at lysine 32 and lysine 38. Serine 117 is subject to Phosphoserine. The segment at 199 to 249 (DVVCDVCRSPEGEDGNEMVFCDKCNVCVHQACYGILKVPTGSWLCRTCALG) adopts a PHD-type 1 zinc-finger fold. Residues 251-285 (QPKCLLCPKRGGALKPTRSGTKWVHVSCALWIPEV) form a C2HC pre-PHD-type zinc finger. Position 298 is an N6-acetyllysine (lysine 298). The PHD-type 2 zinc-finger motif lies at 309-365 (LSCSLCKECTGTCIQCSMPSCVTAFHVTCAFDHGLEMRTILADNDEVKFKSFCQEHS). Disordered regions lie at residues 361 to 386 (CQEH…AGED) and 578 to 777 (SFMR…PREA). Residues 372–381 (EPTSEPTEPS) show a composition bias toward polar residues. Residues 593 to 606 (KARGRTRLPAKKKP) show a composition bias toward basic residues. Low complexity predominate over residues 684–693 (AASVAADSDV). Basic and acidic residues predominate over residues 737-747 (ERPKVSLHFDT). Residues 757-767 (EMSDSDVEAED) are compositionally biased toward acidic residues.

This sequence belongs to the JADE family. In terms of assembly, component of the HBO1 complex composed at least of ING4 or ING5, MYST2/HBO1, MEAF6, and one of JADE1, JADE2 and JADE3. Interacts (via C-terminus) with KDM1A (via AOD/Tower domain).

It carries out the reaction S-ubiquitinyl-[E2 ubiquitin-conjugating enzyme]-L-cysteine + [acceptor protein]-L-lysine = [E2 ubiquitin-conjugating enzyme]-L-cysteine + N(6)-ubiquitinyl-[acceptor protein]-L-lysine.. It participates in protein modification; protein ubiquitination. In terms of biological role, scaffold subunit of some HBO1 complexes, which have a histone H4 acetyltransferase activity. Acts as an E3 ubiquitin-protein ligase mediating the ubiquitination and subsequent proteasomal degradation of target protein histone demethylase KDM1A. Also acts as a ubiquitin ligase E3 toward itself. Positive regulator of neurogenesis. This is E3 ubiquitin-protein ligase Jade-2 (JADE2) from Homo sapiens (Human).